Consider the following 666-residue polypeptide: Frizzled-3 (666 aa).

Residues 1–22 form the signal peptide; that stretch reads MAVSWIVFDLWLLTVFLGQIGG. In terms of domain architecture, FZ spans 23–136; it reads HSLFSCEPIT…CSRFPDCDEP (114 aa). At 23–205 the chain is on the extracellular side; the sequence is HSLFSCEPIT…REELSFARYF (183 aa). Intrachain disulfides connect Cys-28–Cys-89, Cys-36–Cys-82, Cys-73–Cys-110, Cys-99–Cys-133, and Cys-103–Cys-127. N-linked (GlcNAc...) asparagine glycosylation occurs at Asn-42. A helical membrane pass occupies residues 206-226; the sequence is IGLISIICLSATLFTFLTFLI. Residues 227–237 lie on the Cytoplasmic side of the membrane; that stretch reads DVTRFRYPERP. A helical transmembrane segment spans residues 238-258; the sequence is IIFYAVCYMMVSLIFFIGFLL. Topologically, residues 259–288 are extracellular; it reads EDRVACNASSPAQYKASTVTQGSHNKACTM. N-linked (GlcNAc...) asparagine glycosylation is present at Asn-265. The helical transmembrane segment at 289 to 309 threads the bilayer; sequence LFMVLYFFTMAGSVWWVILTI. Over 310-328 the chain is Cytoplasmic; sequence TWFLAAVPKWGSEAIEKKA. A helical membrane pass occupies residues 329–349; the sequence is LLFHASAWGIPGTLTIILLAM. Residues 350 to 374 are Extracellular-facing; the sequence is NKIEGDNISGVCFVGLYDVDALRYF. Residue Asn-356 is glycosylated (N-linked (GlcNAc...) asparagine). A helical membrane pass occupies residues 375 to 395; sequence VLAPLCLYVVVGVSLLLAGII. Residues 396 to 420 are Cytoplasmic-facing; that stretch reads SLNRVRIEIPLEKENQDKLVKFMIR. The helical transmembrane segment at 421-441 threads the bilayer; that stretch reads IGVFSILYLVPLLVVIGCYFY. At 442–477 the chain is on the extracellular side; it reads EQAYRGIWETTWIQERCREYHIPCPYQVTQMSRPDL. Residues 478-498 traverse the membrane as a helical segment; the sequence is ILFLMKYLMALIVGIPSIFWV. Residues 499 to 666 are Cytoplasmic-facing; the sequence is GSKKTCFEWA…RVIEEDGTSA (168 aa). The Lys-Thr-X-X-X-Trp motif, mediates interaction with the PDZ domain of Dvl family members motif lies at 502–507; that stretch reads KTCFEW. Residues 538–666 are disordered; sequence RDPNTPIIRK…RVIEEDGTSA (129 aa). Residues 550-565 show a composition bias toward polar residues; sequence GTSTQGTSTHASSTQL. Over residues 617-638 the composition is skewed to basic and acidic residues; that stretch reads LTDHSRHSSSHRLNEQSRHSSI. Residues 639–656 show a composition bias toward polar residues; sequence RDLSNNPMTHITHGTSMN.

It belongs to the G-protein coupled receptor Fz/Smo family. In terms of assembly, interacts with VANGL2. In terms of processing, ubiquitinated by ZNRF3, leading to its degradation by the proteasome. As to expression, expressed in the cortex, diencephalon, rostral brainstem and little or no staining is seen in the striatum or cerebellum. Expressed in both hair cells and supporting cells in the utricle, saccule, cristae and the organ of Corti in the inner ear (at protein level). Highly expressed in the CNS. In skin, it is restricted to the epidermis and to the developing hair follicle.

The protein resides in the membrane. It is found in the cell membrane. The protein localises to the cell surface. It localises to the apical cell membrane. Its function is as follows. Receptor for Wnt proteins. Most of frizzled receptors are coupled to the beta-catenin canonical signaling pathway, which leads to the activation of disheveled proteins, inhibition of GSK-3 kinase, nuclear accumulation of beta-catenin and activation of Wnt target genes. A second signaling pathway involving PKC and calcium fluxes has been seen for some family members, but it is not yet clear if it represents a distinct pathway or if it can be integrated in the canonical pathway, as PKC seems to be required for Wnt-mediated inactivation of GSK-3 kinase. Both pathways seem to involve interactions with G-proteins. Activation by Wnt5A stimulates PKC activity via a G-protein-dependent mechanism. Involved in transduction and intercellular transmission of polarity information during tissue morphogenesis and/or in differentiated tissues. Plays a role in controlling early axon growth and guidance processes necessary for the formation of a subset of central and peripheral major fiber tracts. Required for the development of major fiber tracts in the central nervous system, including: the anterior commissure, the corpus callosum, the thalamocortical, corticothalamic and nigrostriatal tracts, the corticospinal tract, the fasciculus retroflexus, the mammillothalamic tract, the medial lemniscus, and ascending fiber tracts from the spinal cord to the brain. In the peripheral nervous system, controls axon growth in distinct populations of cranial and spinal motor neurons, including the facial branchimotor nerve, the hypoglossal nerve, the phrenic nerve, and motor nerves innervating dorsal limbs. Involved in the migration of cranial neural crest cells. May also be implicated in the transmission of sensory information from the trunk and limbs to the brain. Controls commissural sensory axons guidance after midline crossing along the anterior-posterior axis in the developing spinal cord in a Wnt-dependent signaling pathway. Together with FZD6, is involved in the neural tube closure and plays a role in the regulation of the establishment of planar cell polarity (PCP), particularly in the orientation of asymmetric bundles of stereocilia on the apical faces of a subset of auditory and vestibular sensory cells located in the inner ear. Promotes neurogenesis by maintaining sympathetic neuroblasts within the cell cycle in a beta-catenin-dependent manner. This is Frizzled-3 (Fzd3) from Mus musculus (Mouse).